The primary structure comprises 429 residues: Chaperone SurA (429 aa).

The first 18 residues, 1 to 18, serve as a signal peptide directing secretion; that stretch reads MFKRIALVCALFSGVCFA. PpiC domains are found at residues 170–271 and 281–380; these read NLTY…KLVA and ITQT…EVIA.

Its subcellular location is the periplasm. The enzyme catalyses [protein]-peptidylproline (omega=180) = [protein]-peptidylproline (omega=0). Functionally, chaperone involved in the correct folding and assembly of outer membrane proteins. Recognizes specific patterns of aromatic residues and the orientation of their side chains, which are found more frequently in integral outer membrane proteins. May act in both early periplasmic and late outer membrane-associated steps of protein maturation. The sequence is that of Chaperone SurA from Legionella pneumophila (strain Lens).